Consider the following 606-residue polypeptide: 4-hydroxy-3-methylbut-2-en-1-yl diphosphate synthase (flavodoxin) (606 aa).

Residues Cys513, Cys516, Cys547, and Glu554 each coordinate [4Fe-4S] cluster.

This sequence belongs to the IspG family. It depends on [4Fe-4S] cluster as a cofactor.

The enzyme catalyses (2E)-4-hydroxy-3-methylbut-2-enyl diphosphate + oxidized [flavodoxin] + H2O + 2 H(+) = 2-C-methyl-D-erythritol 2,4-cyclic diphosphate + reduced [flavodoxin]. The protein operates within isoprenoid biosynthesis; isopentenyl diphosphate biosynthesis via DXP pathway; isopentenyl diphosphate from 1-deoxy-D-xylulose 5-phosphate: step 5/6. Its function is as follows. Converts 2C-methyl-D-erythritol 2,4-cyclodiphosphate (ME-2,4cPP) into 1-hydroxy-2-methyl-2-(E)-butenyl 4-diphosphate. The sequence is that of 4-hydroxy-3-methylbut-2-en-1-yl diphosphate synthase (flavodoxin) from Chlamydia felis (strain Fe/C-56) (Chlamydophila felis).